A 532-amino-acid chain; its full sequence is Telomerase Cajal body protein 1 (532 aa).

Positions 1–53 (MKTSEERLLAPDSLPPDLAPAPVPQGSPAEKNTDFEPVPPPCGGDDQPQLATD) are disordered. Pro residues predominate over residues 13-25 (SLPPDLAPAPVPQ). Residues Ser-27, Ser-61, and Ser-83 each carry the phosphoserine modification. Residues 80 to 122 (SELSPGIEEQDVSEHASLPGEETNLPELESGEATEGVSEERAE) are disordered. WD repeat units follow at residues 151 to 190 (RSEN…YSEQ), 206 to 251 (EGDT…LRAS), 256 to 297 (NHLD…RDCE), 307 to 348 (GQSG…ALLG), 349 to 389 (GHQG…HLLW), and 395 to 434 (VTTN…SDDS). Thr-474 carries the phosphothreonine modification. Residue Ser-476 is modified to Phosphoserine. The interval 510–532 (DPSSPVDDQDEKGQRRTEAVGMS) is disordered. The segment covering 520–532 (EKGQRRTEAVGMS) has biased composition (basic and acidic residues).

The protein belongs to the TCAB1 family. As to quaternary structure, component of the telomerase holoenzyme complex composed of one molecule of TERT, one molecule of WRAP53/TCAB1, two molecules of H/ACA ribonucleoprotein complex subunits DKC1, NOP10, NHP2 and GAR1, and a telomerase RNA template component (TERC). The telomerase holoenzyme complex is associated with TEP1, SMG6/EST1A and POT1. Interacts with the chaperonin-containing T-complex (TRiC) complex; which mediates the folding of WRAP53/TCAB1. Interacts with COIL. Interacts with SMN1. Interacts with RNF8. Interacts with histone H2AX. In terms of processing, phosphorylated at Ser-61 by ATM in response to DNA damage, promoting its interaction with histone H2AX and localization to sites of DNA double-strand breaks.

It is found in the nucleus. Its subcellular location is the cajal body. The protein localises to the chromosome. The protein resides in the telomere. In terms of biological role, RNA chaperone that plays a key role in telomere maintenance and RNA localization to Cajal bodies. Specifically recognizes and binds the Cajal body box (CAB box) present in both small Cajal body RNAs (scaRNAs) and telomerase RNA template component (TERC). Essential component of the telomerase holoenzyme complex, a ribonucleoprotein complex essential for the replication of chromosome termini that elongates telomeres in most eukaryotes. In the telomerase holoenzyme complex, required to stimulate the catalytic activity of the complex. Acts by specifically binding the CAB box of the TERC RNA and controlling the folding of the CR4/CR5 region of the TERC RNA, a critical step for telomerase activity. In addition, also controls telomerase holoenzyme complex localization to Cajal body. During S phase, required for delivery of TERC to telomeres during S phase and for telomerase activity. In addition to its role in telomere maintenance, also required for Cajal body formation, probably by mediating localization of scaRNAs to Cajal bodies. Also plays a role in DNA repair: phosphorylated by ATM in response to DNA damage and relocalizes to sites of DNA double-strand breaks to promote the repair of DNA double-strand breaks. Acts by recruiting the ubiquitin ligase RNF8 to DNA breaks and promote both homologous recombination (HR) and non-homologous end joining (NHEJ). This chain is Telomerase Cajal body protein 1, found in Mus musculus (Mouse).